A 277-amino-acid polypeptide reads, in one-letter code: Thiazole synthase (277 aa).

The active-site Schiff-base intermediate with DXP is the Lys-116. 1-deoxy-D-xylulose 5-phosphate contacts are provided by residues Gly-177, 203-204 (AG), and 225-226 (NT).

It belongs to the ThiG family. In terms of assembly, homotetramer. Forms heterodimers with either ThiH or ThiS.

It is found in the cytoplasm. The enzyme catalyses [ThiS sulfur-carrier protein]-C-terminal-Gly-aminoethanethioate + 2-iminoacetate + 1-deoxy-D-xylulose 5-phosphate = [ThiS sulfur-carrier protein]-C-terminal Gly-Gly + 2-[(2R,5Z)-2-carboxy-4-methylthiazol-5(2H)-ylidene]ethyl phosphate + 2 H2O + H(+). It participates in cofactor biosynthesis; thiamine diphosphate biosynthesis. Functionally, catalyzes the rearrangement of 1-deoxy-D-xylulose 5-phosphate (DXP) to produce the thiazole phosphate moiety of thiamine. Sulfur is provided by the thiocarboxylate moiety of the carrier protein ThiS. In vitro, sulfur can be provided by H(2)S. This Thermosynechococcus vestitus (strain NIES-2133 / IAM M-273 / BP-1) protein is Thiazole synthase.